A 466-amino-acid chain; its full sequence is 3-isopropylmalate dehydratase large subunit (466 aa).

[4Fe-4S] cluster contacts are provided by Cys-347, Cys-407, and Cys-410.

Belongs to the aconitase/IPM isomerase family. LeuC type 1 subfamily. In terms of assembly, heterodimer of LeuC and LeuD. [4Fe-4S] cluster serves as cofactor.

It carries out the reaction (2R,3S)-3-isopropylmalate = (2S)-2-isopropylmalate. The protein operates within amino-acid biosynthesis; L-leucine biosynthesis; L-leucine from 3-methyl-2-oxobutanoate: step 2/4. Catalyzes the isomerization between 2-isopropylmalate and 3-isopropylmalate, via the formation of 2-isopropylmaleate. This Blochmanniella pennsylvanica (strain BPEN) protein is 3-isopropylmalate dehydratase large subunit.